A 100-amino-acid polypeptide reads, in one-letter code: Urease subunit gamma (100 aa).

The protein belongs to the urease gamma subunit family. Heterotrimer of UreA (gamma), UreB (beta) and UreC (alpha) subunits. Three heterotrimers associate to form the active enzyme.

Its subcellular location is the cytoplasm. It catalyses the reaction urea + 2 H2O + H(+) = hydrogencarbonate + 2 NH4(+). It participates in nitrogen metabolism; urea degradation; CO(2) and NH(3) from urea (urease route): step 1/1. In Citrobacter koseri (strain ATCC BAA-895 / CDC 4225-83 / SGSC4696), this protein is Urease subunit gamma.